The following is a 91-amino-acid chain: Progonadoliberin-1 (91 aa).

The signal sequence occupies residues 1–21 (MVVKTWMPWLLVSSVLSQGCC). Q22 bears the Pyrrolidone carboxylic acid mark. Residue G31 is modified to Glycine amide.

The protein belongs to the GnRH family. In terms of tissue distribution, expressed in the cell bodies of a cluster of neurons in the preoptic region.

The protein resides in the secreted. Functionally, stimulates the secretion of gonadotropins. This is Progonadoliberin-1 (gnrh1) from Oryzias latipes (Japanese rice fish).